Here is a 102-residue protein sequence, read N- to C-terminus: Citrate lyase acyl carrier protein (102 aa).

Ser-14 is modified (O-(phosphoribosyl dephospho-coenzyme A)serine).

The protein belongs to the CitD family. As to quaternary structure, oligomer with a subunit composition of (alpha,beta,gamma)6.

The protein localises to the cytoplasm. Its function is as follows. Covalent carrier of the coenzyme of citrate lyase. This Streptococcus mutans serotype c (strain ATCC 700610 / UA159) protein is Citrate lyase acyl carrier protein.